A 500-amino-acid polypeptide reads, in one-letter code: NAD(P)H-quinone oxidoreductase chain 4, chloroplastic (500 aa).

The next 14 helical transmembrane spans lie at 3-23, 37-57, 84-104, 111-129, 134-154, 167-187, 208-228, 242-262, 272-292, 305-325, 330-350, 386-406, 416-436, and 462-482; these read FFPW…VIFF, ICIC…HFQF, GLSI…TLAA, SRLF…IGSF, LLLF…LLSI, FILY…GVGL, ALEI…SPII, HYST…YGLI, AHSI…IYAA, IAYS…SITD, GAIL…FLAG, LALP…GIIT, ILIT…SLSM, and LFVS…PDFV.

It belongs to the complex I subunit 4 family.

The protein resides in the plastid. It is found in the chloroplast thylakoid membrane. The catalysed reaction is a plastoquinone + NADH + (n+1) H(+)(in) = a plastoquinol + NAD(+) + n H(+)(out). The enzyme catalyses a plastoquinone + NADPH + (n+1) H(+)(in) = a plastoquinol + NADP(+) + n H(+)(out). The chain is NAD(P)H-quinone oxidoreductase chain 4, chloroplastic from Panax ginseng (Korean ginseng).